Here is a 419-residue protein sequence, read N- to C-terminus: Probable sodium/metabolite cotransporter BASS2, chloroplastic (419 aa).

The N-terminal 45 residues, 1–45 (MAASTTCPARSMASVSRALRPRPHAAIASAAVRTAARLGGGLGIV), are a transit peptide targeting the chloroplast. A run of 9 helical transmembrane segments spans residues 106 to 126 (IVEL…IIGI), 137 to 157 (TDLF…TLTF), 170 to 190 (VGVG…AIAM), 194 to 214 (LSAP…GQAS), 225 to 245 (VALS…MTPL), 259 to 279 (AAGL…VGVL), 291 to 311 (IISI…ASPI), 323 to 343 (GQLI…GYWL), and 384 to 404 (VPSA…AVFW).

The protein belongs to the bile acid:sodium symporter (BASS) (TC 2.A.28) family.

Its subcellular location is the membrane. The protein localises to the plastid. It localises to the chloroplast envelope. Functionally, may function as sodium-coupled metabolite transporter across the chloroplast envelope. The chain is Probable sodium/metabolite cotransporter BASS2, chloroplastic (BASS2) from Oryza sativa subsp. japonica (Rice).